A 130-amino-acid chain; its full sequence is 3-aminoacrylate deaminase RutC (130 aa).

The protein belongs to the RutC family.

It catalyses the reaction (Z)-3-aminoacrylate + H2O + H(+) = 3-oxopropanoate + NH4(+). In terms of biological role, involved in pyrimidine catabolism. Catalyzes the deamination of 3-aminoacrylate to malonic semialdehyde, a reaction that can also occur spontaneously. RutC may facilitate the reaction and modulate the metabolic fitness, rather than catalyzing essential functions. This is 3-aminoacrylate deaminase RutC from Variovorax paradoxus (strain S110).